A 92-amino-acid polypeptide reads, in one-letter code: CRISPR-associated endoribonuclease Cas2 2 (92 aa).

Mg(2+) is bound at residue aspartate 12.

Belongs to the CRISPR-associated endoribonuclease Cas2 protein family. As to quaternary structure, homodimer, forms a heterotetramer with a Cas1 homodimer. Mg(2+) is required as a cofactor.

In terms of biological role, CRISPR (clustered regularly interspaced short palindromic repeat), is an adaptive immune system that provides protection against mobile genetic elements (viruses, transposable elements and conjugative plasmids). CRISPR clusters contain sequences complementary to antecedent mobile elements and target invading nucleic acids. CRISPR clusters are transcribed and processed into CRISPR RNA (crRNA). Functions as a ssRNA-specific endoribonuclease. Involved in the integration of spacer DNA into the CRISPR cassette. This Archaeoglobus fulgidus (strain ATCC 49558 / DSM 4304 / JCM 9628 / NBRC 100126 / VC-16) protein is CRISPR-associated endoribonuclease Cas2 2 (cas22).